Reading from the N-terminus, the 510-residue chain is Hyaluronidase PH-20 (510 aa).

The N-terminal stretch at 1–35 is a signal peptide; it reads MGVLKFKHIFFRSFVKSSGVSQIVFTFLLIPCCLT. 2 disulfide bridges follow: Cys-60–Cys-351 and Cys-224–Cys-238. The N-linked (GlcNAc...) asparagine glycan is linked to Asn-82. The active-site Proton donor is the Glu-148. Asn-166, Asn-235, Asn-254, and Asn-368 each carry an N-linked (GlcNAc...) asparagine glycan. Disulfide bonds link Cys-376–Cys-387, Cys-381–Cys-435, and Cys-437–Cys-464. 3 N-linked (GlcNAc...) asparagine glycosylation sites follow: Asn-393, Asn-440, and Asn-484. Residue Ser-491 is the site of GPI-anchor amidated serine attachment. Positions 492-510 are cleaved as a propeptide — removed in mature form; the sequence is TTMFIVNILFLIISSVASL.

Belongs to the glycosyl hydrolase 56 family. As to expression, testis.

The protein resides in the cell membrane. It carries out the reaction Random hydrolysis of (1-&gt;4)-linkages between N-acetyl-beta-D-glucosamine and D-glucuronate residues in hyaluronate.. Its function is as follows. Involved in sperm-egg adhesion. Upon fertilization sperm must first penetrate a layer of cumulus cells that surrounds the egg before reaching the zona pellucida. The cumulus cells are embedded in a matrix containing hyaluronic acid which is formed prior to ovulation. This protein aids in penetrating the layer of cumulus cells by digesting hyaluronic acid. The polypeptide is Hyaluronidase PH-20 (SPAM1) (Macaca fascicularis (Crab-eating macaque)).